The sequence spans 206 residues: Ribosomal RNA large subunit methyltransferase E (206 aa).

The S-adenosyl-L-methionine site is built by Gly-61, Trp-63, Asp-81, Asp-97, and Asp-122. The active-site Proton acceptor is the Lys-162.

Belongs to the class I-like SAM-binding methyltransferase superfamily. RNA methyltransferase RlmE family.

The protein localises to the cytoplasm. It carries out the reaction uridine(2552) in 23S rRNA + S-adenosyl-L-methionine = 2'-O-methyluridine(2552) in 23S rRNA + S-adenosyl-L-homocysteine + H(+). Functionally, specifically methylates the uridine in position 2552 of 23S rRNA at the 2'-O position of the ribose in the fully assembled 50S ribosomal subunit. The protein is Ribosomal RNA large subunit methyltransferase E of Neisseria gonorrhoeae (strain NCCP11945).